Reading from the N-terminus, the 424-residue chain is Microcin H47 secretion protein MchE (424 aa).

Residues 1 to 25 are Cytoplasmic-facing; sequence MFRQDALENRKMKWQGRAILLPGIP. Residues 26–46 traverse the membrane as a helical segment; it reads LWLIMLGSIVFITAFLMFIIV. Residues 47–424 lie on the Periplasmic side of the membrane; it reads GTYSRRVNVS…KHSATGPLND (378 aa).

The protein belongs to the membrane fusion protein (MFP) (TC 8.A.1) family.

It is found in the cell inner membrane. Probably involved, in conjunction with MchF, in the secretion of microcin H47. The protein is Microcin H47 secretion protein MchE (mchE) of Escherichia coli.